Reading from the N-terminus, the 977-residue chain is Receptor protein-tyrosine kinase CEPR2 (977 aa).

The N-terminal stretch at 1–31 (MSRRPDLLRGSVVATVAATFLLFIFPPNVES) is a signal peptide. Over 32–620 (TVEKQALFRF…NVKRNSSLDG (589 aa)) the chain is Extracellular. An N-linked (GlcNAc...) asparagine glycan is attached at N85. LRR repeat units follow at residues 97–121 (LTKL…IVNC), 122–146 (KNLK…PLKS), 148–167 (EILD…WIGN), 168–192 (MNQL…SIGG), 193–217 (LKKL…IFDL), 219–241 (ALDT…ISRL), 242–265 (VNLT…IKNL), 266–288 (TRLR…ELGV), 290–312 (KELR…GFGD), 313–338 (LSHL…GRFS), 340–361 (LDTV…LCQN), 363–385 (KLQF…YGEC), 386–409 (KSLL…FWSL), 411–433 (LAKM…IGLS), 434–457 (TELS…LGRL), 458–481 (TNIE…VGDL), 482–504 (KELS…ELKN), 506–529 (VKLV…LSQI), 530–553 (ASLN…LVKL), and 555–576 (LSFI…LLAV). N-linked (GlcNAc...) asparagine glycosylation occurs at N128. N205 carries N-linked (GlcNAc...) asparagine glycosylation. N-linked (GlcNAc...) asparagine glycosylation is found at N243, N251, and N264. N-linked (GlcNAc...) asparagine glycans are attached at residues N301 and N325. N-linked (GlcNAc...) asparagine glycosylation is found at N469 and N491. Residue N615 is glycosylated (N-linked (GlcNAc...) asparagine). The helical transmembrane segment at 621–641 (TLLFLALAIVVVVLVSGLFAL) threads the bilayer. Residues 642–977 (RYRVVKIREL…SQDTTGKITV (336 aa)) lie on the Cytoplasmic side of the membrane. The region spanning 683–965 (LDEDHVIGSG…RKLDDADPCV (283 aa)) is the Protein kinase domain. Residues 689–697 (IGSGSAGKV) and K712 each bind ATP. A Phosphotyrosine modification is found at Y801. Residue D814 is the Proton acceptor of the active site. Residue S846 is modified to Phosphoserine. Residues Y854 and Y861 each carry the phosphotyrosine modification.

Belongs to the protein kinase superfamily. Ser/Thr protein kinase family. Interacts with the root-derived peptide CEP1. Binds to the ammonium transporter AMT1-1. Expressed in mature leaves, primary roots, and the root tips of both primary and lateral roots.

The protein localises to the cell membrane. It catalyses the reaction L-tyrosyl-[protein] + ATP = O-phospho-L-tyrosyl-[protein] + ADP + H(+). Functionally, receptor kinase involved in the perception of C-terminally encoded plant signaling peptide (CEP) and subsequent regulation of root and shoot development. Together with CEPR1, mediates systemic nitrogen (N)-demand signaling upon the perception of root-derived peptides (e.g. CEP1) via the up-regulation of genes involved in N uptake and assimilation pathways. In Arabidopsis thaliana (Mouse-ear cress), this protein is Receptor protein-tyrosine kinase CEPR2.